Here is a 125-residue protein sequence, read N- to C-terminus: Putative zinc finger A20 and AN1 domain-containing stress-associated protein 8 (125 aa).

The A20-type zinc-finger motif lies at 2-36 (TGEPSLCIRGCGFFSTSQTKNLCSKCYNDFLKDES). Zn(2+) is bound by residues Cys-8, Cys-12, Cys-24, Cys-27, Cys-80, Cys-82, His-96, and Cys-98. The AN1-type; degenerate zinc finger occupies 61–106 (LGSKGGCACKKKVGLLGFHCRCGHLFFASHRYPEEHSCPSDYKSAA).

In terms of biological role, may be involved in environmental stress response. This Arabidopsis thaliana (Mouse-ear cress) protein is Putative zinc finger A20 and AN1 domain-containing stress-associated protein 8 (SAP8).